Here is a 492-residue protein sequence, read N- to C-terminus: MKYKDLRDFIAMLEQQGKLKRVAHPVSPHLEMTEIADRVLRAEGPALLFENPVKPDGTRYDYPVLANLFGTPERVAMGMGADSVSKLREIGQTLAYLKEPEPPKGIKDAFSKLPLLKDIWSMAPNVVKNAPCQEIVWEGEDVDLYQLPIQHCWPEDVAPLVTWGLTVTRGPHKKRQNLGIYRQQLIGKNKLVMRWLSHRGGALDYQEFRKLNPDTPYPVAVVLGCDPSTILGAVTPVPDTLSEYQFAGLLRGSRTELVKCIGSDLQVPARAEIVLEGVIHPNETALEGPYGDHTGYYNEQGHFPVFTVERITMRENPIYHSTYTGKPPDEPAVLGVALNEVFVPLLQKQFSEITDFYLPPEGCSYRMAVVSMKKQYAGHAKRVMTGCWSFLRQFMYTKFIIVVDDDVNVRDWKEVIWAVTTRMDPVRDTVLVENTPIDYLDFASPVSGLGGKMGLDATSKWPGETDREWGRVIKKDPAVTVKIDGIWGKLGL.

A Mn(2+)-binding site is contributed by N177. Residues 180–182 (IYR), 194–196 (RWL), and 199–200 (RG) each bind prenylated FMN. E243 contacts Mn(2+). Catalysis depends on D292, which acts as the Proton donor.

This sequence belongs to the UbiD family. In terms of assembly, homohexamer. Prenylated FMN is required as a cofactor. Requires Mn(2+) as cofactor.

The protein localises to the cell membrane. The catalysed reaction is a 4-hydroxy-3-(all-trans-polyprenyl)benzoate + H(+) = a 2-(all-trans-polyprenyl)phenol + CO2. Its pathway is cofactor biosynthesis; ubiquinone biosynthesis. In terms of biological role, catalyzes the decarboxylation of 3-octaprenyl-4-hydroxy benzoate to 2-octaprenylphenol, an intermediate step in ubiquinone biosynthesis. The chain is 3-octaprenyl-4-hydroxybenzoate carboxy-lyase from Neisseria gonorrhoeae (strain ATCC 700825 / FA 1090).